Consider the following 287-residue polypeptide: MTYENNSVPRIVIKKVLAKLEKEGEGAVVRNGITKIDQKLLDPFVLLVEFSFSLSAGFPDHPHRGFESVTYMLQGGIIHKDPKGHKGTIQAGDVQWMTAGRGIIHSEFPEEEVNNGLQLWINLPSTEKMTEPKYKELSSLDIPRAEENGVEVKVIAGDSMGIKSPVYTRTPTMFLDFTLKPGSQTHQTVPESWTAFAYIIEGDEGVFGSLNSSAISAHHVVVFGPGDLVSVWNKSTSRSLRFLLIAGEPIGEPVVQCGPFVMNSQAEIDMAFDDYQNAKNGFEMAKC.

The residue at position 2 (Thr2) is an N-acetylthreonine.

It belongs to the pirin family. Interacts with the G protein alpha-1 subunit GPA1. Interacts with NFYB6 and NFYB9.

It localises to the nucleus. Functionally, involved in abscisic acid signal transduction. Plays a role in seed germination and early seedling development. Involved in the blue light (BL) signaling. In Arabidopsis thaliana (Mouse-ear cress), this protein is Pirin-1 (PRN1).